The sequence spans 446 residues: Tubulin beta chain (446 aa).

GTP is bound by residues Gln-11, Glu-69, Ser-138, Gly-142, Thr-143, Gly-144, Asn-204, and Asn-226. Residue Glu-69 coordinates Mg(2+). Positions 426-446 are disordered; sequence QDATAEEEGEYVEDEDEMDGM. A compositionally biased stretch (acidic residues) spans 429-446; the sequence is TAEEEGEYVEDEDEMDGM.

It belongs to the tubulin family. As to quaternary structure, dimer of alpha and beta chains. A typical microtubule is a hollow water-filled tube with an outer diameter of 25 nm and an inner diameter of 15 nM. Alpha-beta heterodimers associate head-to-tail to form protofilaments running lengthwise along the microtubule wall with the beta-tubulin subunit facing the microtubule plus end conferring a structural polarity. Microtubules usually have 13 protofilaments but different protofilament numbers can be found in some organisms and specialized cells. Requires Mg(2+) as cofactor.

The protein localises to the cytoplasm. Its subcellular location is the cytoskeleton. Tubulin is the major constituent of microtubules, a cylinder consisting of laterally associated linear protofilaments composed of alpha- and beta-tubulin heterodimers. Microtubules grow by the addition of GTP-tubulin dimers to the microtubule end, where a stabilizing cap forms. Below the cap, tubulin dimers are in GDP-bound state, owing to GTPase activity of alpha-tubulin. This is Tubulin beta chain from Euplotes crassus.